Consider the following 233-residue polypeptide: MDPLLLIGAITAGGVLIGGGVHFVPVGGAPAAMATATGVGTGTAMLAAGAGLTGLITAAAMTGQSPLMIMAAGAVGSMLMIGITMLVGNLIYVFGVGTVPVSAKVSVDPITGMEQEKYVTPGTEGHGLPTVCFVSGIIGGALGGIGGGLIYWALNEALKTLSYGAMGAAGVAAIFAVGIFFINAVIASYNIGGTIEGFHDPKFKRIGRGIVACLIASIVAGALSTLLVYGGVF.

6 helical membrane passes run 4–24 (LLLIGAITAGGVLIGGGVHFV), 39–59 (VGTGTAMLAAGAGLTGLITAA), 67–87 (LMIMAAGAVGSMLMIGITMLV), 133–153 (FVSGIIGGALGGIGGGLIYWA), 166–186 (MGAAGVAAIFAVGIFFINAVI), and 209–229 (GIVACLIASIVAGALSTLLVY).

It belongs to the MtrD family. As to quaternary structure, the complex is composed of 8 subunits; MtrA, MtrB, MtrC, MtrD, MtrE, MtrF, MtrG and MtrH.

Its subcellular location is the cell membrane. It carries out the reaction 5-methyl-5,6,7,8-tetrahydromethanopterin + coenzyme M + 2 Na(+)(in) = 5,6,7,8-tetrahydromethanopterin + methyl-coenzyme M + 2 Na(+)(out). Its pathway is one-carbon metabolism; methanogenesis from CO(2); methyl-coenzyme M from 5,10-methylene-5,6,7,8-tetrahydromethanopterin: step 2/2. Its function is as follows. Part of a complex that catalyzes the formation of methyl-coenzyme M and tetrahydromethanopterin from coenzyme M and methyl-tetrahydromethanopterin. This is an energy-conserving, sodium-ion translocating step. This chain is Tetrahydromethanopterin S-methyltransferase subunit D, found in Methanothermobacter marburgensis (strain ATCC BAA-927 / DSM 2133 / JCM 14651 / NBRC 100331 / OCM 82 / Marburg) (Methanobacterium thermoautotrophicum).